Consider the following 763-residue polypeptide: MSELLSVALFLASVLIYAWKAGRNTWWFAATLTVLGLFVILNITLYASDYFTGDGINDAVLYTLTNSLTGAGVGKYILPGIGIALALVAVFGALGWVLRRRRHHPHHVGYSLLALLLALGSVDASPAFRQITELVKSQMRDGDPDFAVYYKEPAKTIPNPKLNLVYIYGESLERTYFDNDAFPNLTPELGALKNEGLDFSHTMQLPGTDYTIAGMVASQCGIPLFAPFEGNASASVSSFFPQNICLGDILKNSGYQNYFVQGANLRFAGKDVFLKSHGFDHLYGAEELKTVVADPSYRNDWGFYDDTVLDEAWKKFEALSRSGQRFSLFTLTVDTHHPDGFISRTCNRKRYDYDGKPNQSFSAVSCSQENIAEFINKIKASPWFKDTVIVVSSDHLAMNNTAWKYLNKQDRNNLFFILRGDKPQQETLAVKRNTMDNGATVLDILGGDNFIGLGRSSLSGQSLSEVFLNVKEKVLAMKPDIIRLWNFPKEIKDFTVDRDKNMIAFSGSHFRLPLLLRVSDKRVEPLPESEYSAPLRFQLADFAPRDNFVWIDRCYKMAQLWAPALALSTDWCVSQGQLGGQQTVQHVDKAQWKGKTAFKETVIDVTRYQGNVDTLKIVDNDIRYKADSFIFNVAGAPEEVKQFSGISRPESWGRWSNAQLGDEVKIEYKAPLPKKFDLVITAKAFGDNANRPIPVRVGNEEQTLVLGHDVSTITLHFNNPTDANTLVIAPPAPVSTNEGNILGHSPRKLGIGMVEIKVVNVES.

Helical transmembrane passes span 1–21 (MSELLSVALFLASVLIYAWKA), 26–46 (WWFAATLTVLGLFVILNITLY), 77–97 (ILPGIGIALALVAVFGALGWV), and 108–128 (VGYSLLALLLALGSVDASPAF).

It belongs to the OpgB family.

The protein localises to the cell inner membrane. It catalyses the reaction a phosphatidylglycerol + a membrane-derived-oligosaccharide D-glucose = a 1,2-diacyl-sn-glycerol + a membrane-derived-oligosaccharide 6-(glycerophospho)-D-glucose.. It functions in the pathway glycan metabolism; osmoregulated periplasmic glucan (OPG) biosynthesis. In terms of biological role, transfers a phosphoglycerol residue from phosphatidylglycerol to the membrane-bound nascent glucan backbones. The polypeptide is Phosphoglycerol transferase I (Salmonella dublin (strain CT_02021853)).